A 261-amino-acid polypeptide reads, in one-letter code: MYPDLKGKVVAITGAASGLGKAMAIRFGKEQAKVVINYYSNKQDPNEVKEEVIKAGGEAVVVQGDVTKEEDVKNIVQTAIKEFGTLDIMINNAGLENPVPSHEMPLKDWDKVIGTNLTGAFLGSREAIKYFVENDIKGNVINMSSVHEVIPWPLFVHYAASKGGIKLMTETLALEYAPKGIRVNNIGPGAINTPINAEKFADPKQKADVESMIPMGYIGEPEEIAAVAAWLASKEASYVTGITLFADGGMTQYPSFQAGRG.

11 to 35 provides a ligand contact to NADP(+); sequence AITGAASGLGKAMAIRFGKEQAKVV. Ser-145 contributes to the substrate binding site. The Proton acceptor role is filled by Tyr-158.

It belongs to the short-chain dehydrogenases/reductases (SDR) family. As to quaternary structure, homotetramer.

It carries out the reaction D-glucose + NAD(+) = D-glucono-1,5-lactone + NADH + H(+). The enzyme catalyses D-glucose + NADP(+) = D-glucono-1,5-lactone + NADPH + H(+). The sequence is that of Glucose 1-dehydrogenase (gdh) from Bacillus subtilis (strain 168).